The sequence spans 228 residues: ATP-dependent dethiobiotin synthetase BioD (228 aa).

14–19 contributes to the ATP binding site; the sequence is DAGKTL. Threonine 18 contacts Mg(2+). The active site involves lysine 39. ATP-binding positions include aspartate 56, 117–120, and 206–208; these read EGAG and PRL. Positions 56 and 117 each coordinate Mg(2+).

It belongs to the dethiobiotin synthetase family. As to quaternary structure, homodimer. Requires Mg(2+) as cofactor.

The protein resides in the cytoplasm. It carries out the reaction (7R,8S)-7,8-diammoniononanoate + CO2 + ATP = (4R,5S)-dethiobiotin + ADP + phosphate + 3 H(+). It participates in cofactor biosynthesis; biotin biosynthesis; biotin from 7,8-diaminononanoate: step 1/2. Catalyzes a mechanistically unusual reaction, the ATP-dependent insertion of CO2 between the N7 and N8 nitrogen atoms of 7,8-diaminopelargonic acid (DAPA, also called 7,8-diammoniononanoate) to form a ureido ring. The protein is ATP-dependent dethiobiotin synthetase BioD of Cellvibrio japonicus (strain Ueda107) (Pseudomonas fluorescens subsp. cellulosa).